Here is a 383-residue protein sequence, read N- to C-terminus: Cell division protein FtsZ (383 aa).

GTP is bound by residues 20–24 (GGGGN), 107–109 (GTG), glutamate 138, arginine 142, and asparagine 186.

This sequence belongs to the FtsZ family. In terms of assembly, homodimer. Polymerizes to form a dynamic ring structure in a strictly GTP-dependent manner. Interacts directly with several other division proteins.

It localises to the cytoplasm. Functionally, essential cell division protein that forms a contractile ring structure (Z ring) at the future cell division site. The regulation of the ring assembly controls the timing and the location of cell division. One of the functions of the FtsZ ring is to recruit other cell division proteins to the septum to produce a new cell wall between the dividing cells. Binds GTP and shows GTPase activity. This chain is Cell division protein FtsZ, found in Shigella flexneri.